A 222-amino-acid polypeptide reads, in one-letter code: MEAPRSVGGRIQRKPLADCTNTVSRSSQQSSSSVKFANPSLTSSLKRLVEQTTLKEKPKDVNTSATAPEIASRPITTDVRPVTRRMSADLASPASAPSRPQTSRSDMGVSDKDFTEPWSVYTVRRKASGQKRSKDASSSTSAAARIRLDLSSSSGKKTRQASENKKKTLKVAPKKRQRTVKQEKEDPVSAACQDYIEKQKAYFAEIDAFELPVEEVSNSDSD.

Residues Met-1–Ser-189 form a disordered region. Residues Ser-24–Ser-33 show a composition bias toward low complexity. The span at Arg-47–Asp-60 shows a compositional bias: basic and acidic residues. Residues Ala-88–Ser-105 are compositionally biased toward low complexity. Positions Gly-155–Ser-162 match the Nuclear localization signal motif. Residues Lys-167 to Thr-179 are compositionally biased toward basic residues. The segment at Cys-192–Glu-214 is C-terminal Sororin domain.

This sequence belongs to the sororin family.

The protein resides in the nucleus. In terms of biological role, regulator of sister chromatid cohesion in mitosis stabilizing cohesin complex association with chromatin. Antagonizes the action of WAPL proteins (WAPL1 and WAPL2) which stimulates cohesin dissociation from chromatin, particularly during somatic division in root cells and meiocytes during anaphase I. Required for centromeric sister chromatid cohesion during male meiosis (microsporogenesis). Cohesion ensures that chromosome partitioning is accurate in dividing cells and may play an important role in DNA repair. The sequence is that of Sororin-like protein from Arabidopsis thaliana (Mouse-ear cress).